The sequence spans 220 residues: Phosphatidylinositol phosphate synthase (220 aa).

The next 2 helical transmembrane spans lie at 21-46 (LLRA…ALTL) and 52-72 (LFWG…DGAM). A CDP-1,2-diacyl-sn-glycerol is bound at residue 29–32 (DTVT). 2 residues coordinate Mg(2+): Asp66 and Asp69. Positions 70, 74, and 80 each coordinate a CDP-1,2-diacyl-sn-glycerol. Mg(2+) is bound by residues Asp87 and Asp91. Catalysis depends on Asp91, which acts as the Proton acceptor. The next 4 helical transmembrane spans lie at 93-110 (VADG…AFGW), 116-134 (VVAT…YVKA), 154-171 (LIIV…GVQW), and 177-194 (MWVL…RMHA).

The protein belongs to the CDP-alcohol phosphatidyltransferase class-I family. In terms of assembly, homodimer. Mg(2+) serves as cofactor.

The protein resides in the cell membrane. It carries out the reaction a CDP-1,2-diacyl-sn-glycerol + 1D-myo-inositol 3-phosphate = a 1,2-diacyl-sn-glycero-3-phospho-(1D-myo-inositol-3-phosphate) + CMP + H(+). It catalyses the reaction 1,2-di-(9Z-octadecenoyl)-sn-glycero-3-cytidine-5'-diphosphate + 1D-myo-inositol 3-phosphate = 1,2-di-(9Z-octadecenoyl)-sn-glycero-3-phospho-(1D-myo-inositol-3-phosphate) + CMP + H(+). The protein operates within phospholipid metabolism; phosphatidylinositol phosphate biosynthesis. Functionally, catalyzes the conjugation of the 1'-hydroxyl group of D-myo-inositol-3-phosphate (also named L-myo-inositol-1-phosphate) with a lipid tail of cytidine diphosphate diacylglycerol (CDP-DAG), forming phosphatidylinositol phosphate (PIP) and CMP. PIP is a precursor of phosphatidylinositol (PI) which is an essential lipid for mycobacteria required for formation of their cell wall. This chain is Phosphatidylinositol phosphate synthase, found in Mycobacteroides abscessus (strain ATCC 19977 / DSM 44196 / CCUG 20993 / CIP 104536 / JCM 13569 / NCTC 13031 / TMC 1543 / L948) (Mycobacterium abscessus).